A 97-amino-acid polypeptide reads, in one-letter code: MTAKVIQMSSNDSAEVIRQCLQVLDSITSDSSVPRNIRRSVNEIMDILNNESEPLFLRAASSISILEDISNDPNLPLHTRTLIWNLSSQLETIPVDE.

It belongs to the UPF0147 family.

This chain is UPF0147 protein MA_0092, found in Methanosarcina acetivorans (strain ATCC 35395 / DSM 2834 / JCM 12185 / C2A).